We begin with the raw amino-acid sequence, 351 residues long: Thiamine-phosphate synthase (351 aa).

The unknown stretch occupies residues 1–129 (MVEPYSQQKQ…GQACKQMRYR (129 aa)). Positions 130-351 (VYSLETNLMG…SQLNRIKPES (222 aa)) are thiamine-phosphate synthase. 4-amino-2-methyl-5-(diphosphooxymethyl)pyrimidine contacts are provided by residues 177–181 (QYRDK) and Asn-209. The Mg(2+) site is built by Asp-210 and Asp-229. Residue Ser-248 participates in 4-amino-2-methyl-5-(diphosphooxymethyl)pyrimidine binding. Residue 274 to 276 (TPT) participates in 2-[(2R,5Z)-2-carboxy-4-methylthiazol-5(2H)-ylidene]ethyl phosphate binding. Lys-277 is a 4-amino-2-methyl-5-(diphosphooxymethyl)pyrimidine binding site. Gly-304 is a 2-[(2R,5Z)-2-carboxy-4-methylthiazol-5(2H)-ylidene]ethyl phosphate binding site.

It belongs to the thiamine-phosphate synthase family. Mg(2+) is required as a cofactor.

The enzyme catalyses 2-[(2R,5Z)-2-carboxy-4-methylthiazol-5(2H)-ylidene]ethyl phosphate + 4-amino-2-methyl-5-(diphosphooxymethyl)pyrimidine + 2 H(+) = thiamine phosphate + CO2 + diphosphate. It catalyses the reaction 2-(2-carboxy-4-methylthiazol-5-yl)ethyl phosphate + 4-amino-2-methyl-5-(diphosphooxymethyl)pyrimidine + 2 H(+) = thiamine phosphate + CO2 + diphosphate. The catalysed reaction is 4-methyl-5-(2-phosphooxyethyl)-thiazole + 4-amino-2-methyl-5-(diphosphooxymethyl)pyrimidine + H(+) = thiamine phosphate + diphosphate. It participates in cofactor biosynthesis; thiamine diphosphate biosynthesis; thiamine phosphate from 4-amino-2-methyl-5-diphosphomethylpyrimidine and 4-methyl-5-(2-phosphoethyl)-thiazole: step 1/1. Condenses 4-methyl-5-(beta-hydroxyethyl)thiazole monophosphate (THZ-P) and 2-methyl-4-amino-5-hydroxymethyl pyrimidine pyrophosphate (HMP-PP) to form thiamine monophosphate (TMP). This is Thiamine-phosphate synthase from Nostoc sp. (strain PCC 7120 / SAG 25.82 / UTEX 2576).